A 201-amino-acid chain; its full sequence is Large ribosomal subunit protein uL4 (201 aa).

Residues 45–71 (AQKTRAEVTGSGKKPWRQKGTGRARAG) are disordered.

Belongs to the universal ribosomal protein uL4 family. As to quaternary structure, part of the 50S ribosomal subunit.

Functionally, one of the primary rRNA binding proteins, this protein initially binds near the 5'-end of the 23S rRNA. It is important during the early stages of 50S assembly. It makes multiple contacts with different domains of the 23S rRNA in the assembled 50S subunit and ribosome. In terms of biological role, forms part of the polypeptide exit tunnel. The protein is Large ribosomal subunit protein uL4 of Shewanella loihica (strain ATCC BAA-1088 / PV-4).